Consider the following 736-residue polypeptide: 1,4-alpha-glucan branching enzyme GlgB (736 aa).

D415 (nucleophile) is an active-site residue. E470 acts as the Proton donor in catalysis.

Belongs to the glycosyl hydrolase 13 family. GlgB subfamily. As to quaternary structure, monomer.

The enzyme catalyses Transfers a segment of a (1-&gt;4)-alpha-D-glucan chain to a primary hydroxy group in a similar glucan chain.. The protein operates within glycan biosynthesis; glycogen biosynthesis. Its function is as follows. Catalyzes the formation of the alpha-1,6-glucosidic linkages in glycogen by scission of a 1,4-alpha-linked oligosaccharide from growing alpha-1,4-glucan chains and the subsequent attachment of the oligosaccharide to the alpha-1,6 position. This chain is 1,4-alpha-glucan branching enzyme GlgB, found in Paraburkholderia xenovorans (strain LB400).